Consider the following 358-residue polypeptide: NAC domain-containing protein 12 (358 aa).

Residues 16-177 form the NAC domain; the sequence is VPPGFRFHPT…GWVVCRVFRK (162 aa). The DNA-binding element occupies 116–183; it reads IGLRKTLVFY…VFRKKNYQKI (68 aa).

As to expression, stems and roots, specifically in interfascicular fibers (sclerenchyma), cells differentiating into vascular vessels (cambium), and xylem.

It is found in the nucleus. In terms of biological role, transcriptional activator of genes involved in biosynthesis of secondary walls. Together with NST1, required for the secondary cell wall thickening and lignification of sclerenchymatous fibers and secondary xylem vessels (tracheary elements). Seems to repress the secondary cell wall thickening of xylary fibers. May also regulate the secondary cell wall lignification of other tissues. Binds to and activates the promoter of MYB46. This chain is NAC domain-containing protein 12, found in Arabidopsis thaliana (Mouse-ear cress).